A 1384-amino-acid chain; its full sequence is RRP12-like protein (1384 aa).

A compositionally biased stretch (basic residues) spans 1-13; the sequence is MGKFRSKLKRNGK. Residues 1 to 32 are disordered; sequence MGKFRSKLKRNGKGKTWSRGESATSNPTQMKH. The span at 19 to 29 shows a compositional bias: polar residues; the sequence is RGESATSNPTQ. Phosphoserine is present on residues Ser82, Ser85, Ser96, Ser1094, Ser1095, Ser1117, and Ser1119. Disordered regions lie at residues 1082 to 1102, 1114 to 1155, and 1176 to 1384; these read LRKKQNLEAQEDSSDDELVSG, LADS…IRED, and SAQT…KKYK. Composition is skewed to acidic residues over residues 1090-1099 and 1114-1127; these read AQEDSSDDEL and LADSDSDLPEDMDA. The segment covering 1176–1191 has biased composition (polar residues); that stretch reads SAQTATPAQSQKTKAQ. 6 positions are modified to phosphoserine: Ser1221, Ser1225, Ser1227, Ser1230, Ser1250, and Ser1251. Polar residues-rich tracts occupy residues 1276–1285 and 1297–1315; these read SGKTTASSRY and TAGNSDAMSVKSGKSTSRP. Positions 1321-1334 are enriched in basic and acidic residues; it reads GSKKAKGDMKKSGK. Positions 1348-1362 are enriched in basic residues; the sequence is LNKRKRSMNSRKFKS. The segment covering 1369–1378 has biased composition (gly residues); that stretch reads AENGGAGGGR.

It belongs to the RRP12 family.

The protein localises to the nucleus. This Drosophila melanogaster (Fruit fly) protein is RRP12-like protein.